The primary structure comprises 682 residues: Potassium-transporting ATPase ATP-binding subunit (682 aa).

4 helical membrane passes run 44-64 (VMAV…SGHG), 66-86 (AGFG…GNFA), 233-253 (LTFL…GVTL), and 257-277 (LLIA…LPAI). Residue Asp-310 is the 4-aspartylphosphate intermediate of the active site. ATP contacts are provided by residues Asp-347, Glu-351, 377 to 384 (FTAQTRMS), and Lys-395. Mg(2+) is bound by residues Asp-518 and Asp-522. 3 helical membrane passes run 588–608 (FAIL…LNVM), 616–636 (AVLA…PLAL), and 658–678 (GLGG…ALVA).

The protein belongs to the cation transport ATPase (P-type) (TC 3.A.3) family. Type IA subfamily. As to quaternary structure, the system is composed of three essential subunits: KdpA, KdpB and KdpC.

Its subcellular location is the cell inner membrane. The enzyme catalyses K(+)(out) + ATP + H2O = K(+)(in) + ADP + phosphate + H(+). Part of the high-affinity ATP-driven potassium transport (or Kdp) system, which catalyzes the hydrolysis of ATP coupled with the electrogenic transport of potassium into the cytoplasm. This subunit is responsible for energy coupling to the transport system and for the release of the potassium ions to the cytoplasm. This Xanthomonas campestris pv. campestris (strain ATCC 33913 / DSM 3586 / NCPPB 528 / LMG 568 / P 25) protein is Potassium-transporting ATPase ATP-binding subunit.